The following is a 331-amino-acid chain: MLIKTDRWLRGDDIPASEITPQHLFDQRRRLLAAAALGAAGAALSPWAARRAFAASPAPAWLAAKPNPAYATVEKPTPFDEVTTYNNFYEFGTDKSDPARYAGTLRPHPWQVSVEGLVKAPKTYDLDDLMKMAPMEERIYRLRCVEGWSMVIPWVGFPLAELIRRVEPQGSARYIQFISLADKRQMPGVSSPVLDWPYSEGLRMDEAMHPLVLLTFGLYGQVLPNQNGAPVRVIVPWKYGFKSAKSIVRIRFVDKQPPTSWNIAAPNEYGFYSNVNPSVDHPRWSQATERRIGEDKGGFGGLFAPKRKTLMFNGYDQVASLYTGMDLRKFF.

The tat-type signal signal peptide spans 1–54 (MLIKTDRWLRGDDIPASEITPQHLFDQRRRLLAAAALGAAGAALSPWAARRAFA). Residues N86, 89-90 (YE), C144, S179, N227, R232, and 243-245 (SAK) contribute to the Mo-molybdopterin site.

The protein belongs to the MsrP family. In terms of assembly, heterodimer of a catalytic subunit (MsrP) and a heme-binding subunit (MsrQ). The cofactor is Mo-molybdopterin. In terms of processing, predicted to be exported by the Tat system. The position of the signal peptide cleavage has not been experimentally proven.

It localises to the periplasm. It catalyses the reaction L-methionyl-[protein] + a quinone + H2O = L-methionyl-(S)-S-oxide-[protein] + a quinol. It carries out the reaction L-methionyl-[protein] + a quinone + H2O = L-methionyl-(R)-S-oxide-[protein] + a quinol. Functionally, part of the MsrPQ system that repairs oxidized periplasmic proteins containing methionine sulfoxide residues (Met-O), using respiratory chain electrons. Thus protects these proteins from oxidative-stress damage caused by reactive species of oxygen and chlorine generated by the host defense mechanisms. MsrPQ is essential for the maintenance of envelope integrity under bleach stress, rescuing a wide series of structurally unrelated periplasmic proteins from methionine oxidation. The catalytic subunit MsrP is non-stereospecific, being able to reduce both (R-) and (S-) diastereoisomers of methionine sulfoxide. This is Protein-methionine-sulfoxide reductase catalytic subunit MsrP from Ralstonia nicotianae (strain ATCC BAA-1114 / GMI1000) (Ralstonia solanacearum).